Consider the following 139-residue polypeptide: Invertebrate-type lysozyme 3 (139 aa).

Residues 1-18 (MFVKSLVFLTIAVAYASA) form the signal peptide. Residues 19-138 (DCLHCICMRE…WNGIKSCCGC (120 aa)) enclose the I-type lysozyme domain. 7 disulfides stabilise this stretch: C20–C106, C23–C138, C25–C31, C36–C45, C58–C86, C76–C82, and C98–C120. The Proton donor role is filled by E28. The Nucleophile role is filled by D39. 51–57 (KLPYYED) lines the substrate pocket. Substrate contacts are provided by residues Y90 and 113-115 (HNG).

The protein belongs to the glycosyl hydrolase 22 family. Type-I lysozyme subfamily. In terms of tissue distribution, expressed in pharynx grinder muscle pm7, isthmus marginal cell mc2 and pharyngeal muscle cell pm5, intestinal cells and at lower levels in coelomocytes and epidermis. Expressed at low levels in intestine.

It is found in the late endosome lumen. It localises to the recycling endosome lumen. Its subcellular location is the lysosome lumen. The protein resides in the secreted. It catalyses the reaction Hydrolysis of (1-&gt;4)-beta-linkages between N-acetylmuramic acid and N-acetyl-D-glucosamine residues in a peptidoglycan and between N-acetyl-D-glucosamine residues in chitodextrins.. In terms of biological role, has bacteriolytic activity against Gram-positive bacteria. Plays a role in defense against bacterial pathogens. Involved in pharyngeal grinder function by enabling proper lysis of ingested bacteria. This Caenorhabditis elegans protein is Invertebrate-type lysozyme 3.